The following is a 400-amino-acid chain: Bifunctional enzyme IspD/IspF (400 aa).

A 2-C-methyl-D-erythritol 4-phosphate cytidylyltransferase region spans residues 1–240 (MQESTMKFGI…EKLSHALPDV (240 aa)). The interval 241–400 (RTGNGYDVHQ…ATVVYQGRPL (160 aa)) is 2-C-methyl-D-erythritol 2,4-cyclodiphosphate synthase. The a divalent metal cation site is built by Asp-247 and His-249. 4-CDP-2-C-methyl-D-erythritol 2-phosphate-binding positions include 247 to 249 (DVH) and 273 to 274 (HS). Residue His-281 coordinates a divalent metal cation. 4-CDP-2-C-methyl-D-erythritol 2-phosphate is bound by residues 295 to 297 (DIG), 371 to 374 (TTNE), Phe-378, and Arg-381.

This sequence in the N-terminal section; belongs to the IspD/TarI cytidylyltransferase family. IspD subfamily. The protein in the C-terminal section; belongs to the IspF family. Requires a divalent metal cation as cofactor.

The enzyme catalyses 2-C-methyl-D-erythritol 4-phosphate + CTP + H(+) = 4-CDP-2-C-methyl-D-erythritol + diphosphate. The catalysed reaction is 4-CDP-2-C-methyl-D-erythritol 2-phosphate = 2-C-methyl-D-erythritol 2,4-cyclic diphosphate + CMP. It participates in isoprenoid biosynthesis; isopentenyl diphosphate biosynthesis via DXP pathway; isopentenyl diphosphate from 1-deoxy-D-xylulose 5-phosphate: step 2/6. It functions in the pathway isoprenoid biosynthesis; isopentenyl diphosphate biosynthesis via DXP pathway; isopentenyl diphosphate from 1-deoxy-D-xylulose 5-phosphate: step 4/6. Functionally, bifunctional enzyme that catalyzes the formation of 4-diphosphocytidyl-2-C-methyl-D-erythritol from CTP and 2-C-methyl-D-erythritol 4-phosphate (MEP) (IspD), and catalyzes the conversion of 4-diphosphocytidyl-2-C-methyl-D-erythritol 2-phosphate (CDP-ME2P) to 2-C-methyl-D-erythritol 2,4-cyclodiphosphate (ME-CPP) with a corresponding release of cytidine 5-monophosphate (CMP) (IspF). This is Bifunctional enzyme IspD/IspF from Agrobacterium fabrum (strain C58 / ATCC 33970) (Agrobacterium tumefaciens (strain C58)).